The sequence spans 444 residues: UPF0761 membrane protein RC1_0578 (444 aa).

Transmembrane regions (helical) follow at residues 49–69, 103–123, 145–165, 186–206, 219–239, and 248–268; these read LLAL…FPAY, AAAL…LLFF, LLSF…SLSV, FMLP…MIPN, IAAA…IAAF, and ALSV…VVLF. The disordered stretch occupies residues 423 to 444; the sequence is SGQPSGQVETAVRQRTGLQGRI.

This sequence belongs to the UPF0761 family.

Its subcellular location is the cell inner membrane. In Rhodospirillum centenum (strain ATCC 51521 / SW), this protein is UPF0761 membrane protein RC1_0578.